Reading from the N-terminus, the 296-residue chain is 4-diphosphocytidyl-2-C-methyl-D-erythritol kinase (296 aa).

The active site involves K19. Residue 102-112 (PMGAGLGGGSS) participates in ATP binding. D144 is a catalytic residue.

The protein belongs to the GHMP kinase family. IspE subfamily.

The catalysed reaction is 4-CDP-2-C-methyl-D-erythritol + ATP = 4-CDP-2-C-methyl-D-erythritol 2-phosphate + ADP + H(+). Its pathway is isoprenoid biosynthesis; isopentenyl diphosphate biosynthesis via DXP pathway; isopentenyl diphosphate from 1-deoxy-D-xylulose 5-phosphate: step 3/6. Its function is as follows. Catalyzes the phosphorylation of the position 2 hydroxy group of 4-diphosphocytidyl-2C-methyl-D-erythritol. The polypeptide is 4-diphosphocytidyl-2-C-methyl-D-erythritol kinase (Burkholderia pseudomallei (strain 1710b)).